The following is a 398-amino-acid chain: Succinate--CoA ligase [ADP-forming] subunit beta (398 aa).

The ATP-grasp domain occupies 9–254; that stretch reads KAVLREFGVP…ESEEDAKEIE (246 aa). Residues Lys46, 53–55, Glu109, Ser112, and Glu117 contribute to the ATP site; that span reads GRG. Asn209 and Asp223 together coordinate Mg(2+). Residues Asn274 and 331–333 each bind substrate; that span reads GIM.

It belongs to the succinate/malate CoA ligase beta subunit family. In terms of assembly, heterotetramer of two alpha and two beta subunits. Mg(2+) serves as cofactor.

It carries out the reaction succinate + ATP + CoA = succinyl-CoA + ADP + phosphate. The enzyme catalyses GTP + succinate + CoA = succinyl-CoA + GDP + phosphate. Its pathway is carbohydrate metabolism; tricarboxylic acid cycle; succinate from succinyl-CoA (ligase route): step 1/1. Succinyl-CoA synthetase functions in the citric acid cycle (TCA), coupling the hydrolysis of succinyl-CoA to the synthesis of either ATP or GTP and thus represents the only step of substrate-level phosphorylation in the TCA. The beta subunit provides nucleotide specificity of the enzyme and binds the substrate succinate, while the binding sites for coenzyme A and phosphate are found in the alpha subunit. The polypeptide is Succinate--CoA ligase [ADP-forming] subunit beta (Rhodopseudomonas palustris (strain HaA2)).